The sequence spans 352 residues: Probable dual-specificity RNA methyltransferase RlmN (352 aa).

The Proton acceptor role is filled by E92. A Radical SAM core domain is found at 98 to 328 (YKHGFTACIS…ATIRREMGTD (231 aa)). C105 and C333 form a disulfide bridge. [4Fe-4S] cluster-binding residues include C112, C116, and C119. S-adenosyl-L-methionine-binding positions include 159–160 (GE), S191, 214–216 (SLH), and N290. The S-methylcysteine intermediate role is filled by C333.

It belongs to the radical SAM superfamily. RlmN family. Requires [4Fe-4S] cluster as cofactor.

The protein resides in the cytoplasm. It catalyses the reaction adenosine(2503) in 23S rRNA + 2 reduced [2Fe-2S]-[ferredoxin] + 2 S-adenosyl-L-methionine = 2-methyladenosine(2503) in 23S rRNA + 5'-deoxyadenosine + L-methionine + 2 oxidized [2Fe-2S]-[ferredoxin] + S-adenosyl-L-homocysteine. It carries out the reaction adenosine(37) in tRNA + 2 reduced [2Fe-2S]-[ferredoxin] + 2 S-adenosyl-L-methionine = 2-methyladenosine(37) in tRNA + 5'-deoxyadenosine + L-methionine + 2 oxidized [2Fe-2S]-[ferredoxin] + S-adenosyl-L-homocysteine. In terms of biological role, specifically methylates position 2 of adenine 2503 in 23S rRNA and position 2 of adenine 37 in tRNAs. The protein is Probable dual-specificity RNA methyltransferase RlmN of Alkaliphilus metalliredigens (strain QYMF).